A 577-amino-acid chain; its full sequence is Isocitrate dehydrogenase kinase/phosphatase (577 aa).

Residues 315-321 (APGIRGM) and K336 contribute to the ATP site. D371 is a catalytic residue.

It belongs to the AceK family.

Its subcellular location is the cytoplasm. It catalyses the reaction L-seryl-[isocitrate dehydrogenase] + ATP = O-phospho-L-seryl-[isocitrate dehydrogenase] + ADP + H(+). Bifunctional enzyme which can phosphorylate or dephosphorylate isocitrate dehydrogenase (IDH) on a specific serine residue. This is a regulatory mechanism which enables bacteria to bypass the Krebs cycle via the glyoxylate shunt in response to the source of carbon. When bacteria are grown on glucose, IDH is fully active and unphosphorylated, but when grown on acetate or ethanol, the activity of IDH declines drastically concomitant with its phosphorylation. The sequence is that of Isocitrate dehydrogenase kinase/phosphatase from Escherichia fergusonii (strain ATCC 35469 / DSM 13698 / CCUG 18766 / IAM 14443 / JCM 21226 / LMG 7866 / NBRC 102419 / NCTC 12128 / CDC 0568-73).